The primary structure comprises 382 residues: Queuine tRNA-ribosyltransferase (382 aa).

The active-site Proton acceptor is the D96. Residues 96-100 (DSGGF), D151, Q194, and G221 contribute to the substrate site. Positions 252-258 (GVGAPDS) are RNA binding. D271 functions as the Nucleophile in the catalytic mechanism. The tract at residues 276–280 (TRIAR) is RNA binding; important for wobble base 34 recognition. Positions 309, 311, 314, and 340 each coordinate Zn(2+).

This sequence belongs to the queuine tRNA-ribosyltransferase family. In terms of assembly, homodimer. Within each dimer, one monomer is responsible for RNA recognition and catalysis, while the other monomer binds to the replacement base PreQ1. Requires Zn(2+) as cofactor.

It catalyses the reaction 7-aminomethyl-7-carbaguanine + guanosine(34) in tRNA = 7-aminomethyl-7-carbaguanosine(34) in tRNA + guanine. It participates in tRNA modification; tRNA-queuosine biosynthesis. Its function is as follows. Catalyzes the base-exchange of a guanine (G) residue with the queuine precursor 7-aminomethyl-7-deazaguanine (PreQ1) at position 34 (anticodon wobble position) in tRNAs with GU(N) anticodons (tRNA-Asp, -Asn, -His and -Tyr). Catalysis occurs through a double-displacement mechanism. The nucleophile active site attacks the C1' of nucleotide 34 to detach the guanine base from the RNA, forming a covalent enzyme-RNA intermediate. The proton acceptor active site deprotonates the incoming PreQ1, allowing a nucleophilic attack on the C1' of the ribose to form the product. After dissociation, two additional enzymatic reactions on the tRNA convert PreQ1 to queuine (Q), resulting in the hypermodified nucleoside queuosine (7-(((4,5-cis-dihydroxy-2-cyclopenten-1-yl)amino)methyl)-7-deazaguanosine). In Lactococcus lactis subsp. cremoris (strain MG1363), this protein is Queuine tRNA-ribosyltransferase.